Consider the following 111-residue polypeptide: Resistin-like beta (111 aa).

Positions methionine 1–threonine 23 are cleaved as a signal peptide. 5 disulfide bridges follow: cysteine 55–cysteine 108, cysteine 67–cysteine 107, cysteine 76–cysteine 93, cysteine 78–cysteine 95, and cysteine 82–cysteine 97.

This sequence belongs to the resistin/FIZZ family. As to quaternary structure, homodimer; disulfide-linked. As to expression, expressed only in the gastrointestinal tract, particularly the colon.

Its subcellular location is the secreted. In terms of biological role, probable hormone. This chain is Resistin-like beta (RETNLB), found in Homo sapiens (Human).